The chain runs to 200 residues: Superoxide dismutase [Fe] (200 aa).

Fe cation is bound by residues H28, H82, D165, and H169.

It belongs to the iron/manganese superoxide dismutase family. Homodimer. Fe cation serves as cofactor.

It carries out the reaction 2 superoxide + 2 H(+) = H2O2 + O2. Functionally, destroys superoxide anion radicals which are normally produced within the cells and which are toxic to biological systems. The chain is Superoxide dismutase [Fe] (sodB) from Rhodobacter capsulatus (Rhodopseudomonas capsulata).